Reading from the N-terminus, the 297-residue chain is MNALTLPDIAAQASRQTLPLEWVGMCGIALPVVINNQPSAAKADAGVSLDDGEARGIHMSRLYLALEMLEQENLTPALLRRILQRFLDSHEGLAHSAYLRIQLDLLLKRPALVSPLAGWKSYPLSIEARLKNAMFHVELKIDVPYSSTCPCSAALARQLIQQQFIEDFANRPLQHADVLAWLGSPQGVVATPHSQRSNAALHLRLDDFIDELPLIALINDAENALGTAVQTAVKRADEQAFALANGQNLMFCEDAARRLNLALRRSPGINAFQLRVVHAESLHAHDAVAESRWNWEA.

It belongs to the GTP cyclohydrolase IV family.

It carries out the reaction GTP + H2O = 7,8-dihydroneopterin 3'-triphosphate + formate + H(+). It participates in cofactor biosynthesis; 7,8-dihydroneopterin triphosphate biosynthesis; 7,8-dihydroneopterin triphosphate from GTP: step 1/1. Converts GTP to 7,8-dihydroneopterin triphosphate. This Pseudomonas fluorescens (strain ATCC BAA-477 / NRRL B-23932 / Pf-5) protein is GTP cyclohydrolase FolE2.